We begin with the raw amino-acid sequence, 624 residues long: tRNA uridine 5-carboxymethylaminomethyl modification enzyme MnmG (624 aa).

FAD contacts are provided by residues 13-18 (GGGHAG), valine 125, and serine 180. Position 273–287 (273–287 (GPRYCPSIEDKIVRF)) interacts with NAD(+). Glutamine 370 is a binding site for FAD.

It belongs to the MnmG family. In terms of assembly, homodimer. Heterotetramer of two MnmE and two MnmG subunits. FAD serves as cofactor.

It localises to the cytoplasm. Its function is as follows. NAD-binding protein involved in the addition of a carboxymethylaminomethyl (cmnm) group at the wobble position (U34) of certain tRNAs, forming tRNA-cmnm(5)s(2)U34. This chain is tRNA uridine 5-carboxymethylaminomethyl modification enzyme MnmG, found in Legionella pneumophila subsp. pneumophila (strain Philadelphia 1 / ATCC 33152 / DSM 7513).